The sequence spans 276 residues: Glutamate racemase (276 aa).

Substrate-binding positions include 10–11 (DS) and 42–43 (YG). Cysteine 74 acts as the Proton donor/acceptor in catalysis. Position 75–76 (75–76 (NT)) interacts with substrate. Cysteine 185 functions as the Proton donor/acceptor in the catalytic mechanism. Substrate is bound at residue 186–187 (TH).

This sequence belongs to the aspartate/glutamate racemases family.

The catalysed reaction is L-glutamate = D-glutamate. The protein operates within cell wall biogenesis; peptidoglycan biosynthesis. In terms of biological role, provides the (R)-glutamate required for cell wall biosynthesis. This is Glutamate racemase from Levilactobacillus brevis (strain ATCC 367 / BCRC 12310 / CIP 105137 / JCM 1170 / LMG 11437 / NCIMB 947 / NCTC 947) (Lactobacillus brevis).